The primary structure comprises 218 residues: MQPDRDTLLAGAQALGCPLSDTQADALLAYLGLLQRWNQVYNLTAIRDPKQMLVQHLLDSLAVIAPLNRVAGSAPLRLLDVGSGGGLPGVVIAVLRPDCQITCVDTVAKKATFIRQVTAELRLPQLVARHARVEQLTDGPYSVITARAFASLADLVKLTRPLLAPGGCWMAMKGQHPQAEIDALDADINVFHVEQLSVPGLDAERRLVWMRPRSVASS.

S-adenosyl-L-methionine contacts are provided by residues glycine 82, leucine 87, 133–134 (VE), and arginine 147.

Belongs to the methyltransferase superfamily. RNA methyltransferase RsmG family.

The protein localises to the cytoplasm. It catalyses the reaction guanosine(527) in 16S rRNA + S-adenosyl-L-methionine = N(7)-methylguanosine(527) in 16S rRNA + S-adenosyl-L-homocysteine. Functionally, specifically methylates the N7 position of guanine in position 527 of 16S rRNA. This Leptothrix cholodnii (strain ATCC 51168 / LMG 8142 / SP-6) (Leptothrix discophora (strain SP-6)) protein is Ribosomal RNA small subunit methyltransferase G.